We begin with the raw amino-acid sequence, 312 residues long: Malate dehydrogenase (312 aa).

NAD(+) contacts are provided by residues 7 to 13 (GAAGGIG) and aspartate 34. Residues arginine 81 and arginine 87 each contribute to the substrate site. Residues asparagine 94 and 117–119 (ITN) contribute to the NAD(+) site. Asparagine 119 and arginine 153 together coordinate substrate. Catalysis depends on histidine 177, which acts as the Proton acceptor. Position 227 (methionine 227) interacts with NAD(+).

The protein belongs to the LDH/MDH superfamily. MDH type 1 family. In terms of assembly, homodimer.

It catalyses the reaction (S)-malate + NAD(+) = oxaloacetate + NADH + H(+). Its function is as follows. Catalyzes the reversible oxidation of malate to oxaloacetate. The polypeptide is Malate dehydrogenase (Klebsiella pneumoniae (strain 342)).